The primary structure comprises 907 residues: Aldehyde oxidoreductase (907 aa).

A 2Fe-2S ferredoxin-type domain is found at 2–79 (IQKVITVNGI…GAQITTIEGV (78 aa)). 8 residues coordinate [2Fe-2S] cluster: Cys40, Cys45, Cys48, Cys60, Cys100, Cys103, Cys137, and Cys139. Residues His653 and Glu869 each coordinate Mo-molybdopterin cytosine dinucleotide.

The protein belongs to the xanthine dehydrogenase family. In terms of assembly, homodimer. Mo-molybdopterin cytosine dinucleotide is required as a cofactor. [2Fe-2S] cluster serves as cofactor.

The enzyme catalyses an aldehyde + A + H2O = a carboxylate + AH2 + H(+). This Megalodesulfovibrio gigas (Desulfovibrio gigas) protein is Aldehyde oxidoreductase (mop).